The following is a 196-amino-acid chain: Small ribosomal subunit protein uS4c (196 aa).

Residues 17 to 36 (ALPGLTRKTPKSGSNLKKKF) form a disordered region. Residues 89 to 150 (MRLDNILFRL…NQRSKRLIQN (62 aa)) form the S4 RNA-binding domain.

This sequence belongs to the universal ribosomal protein uS4 family. Part of the 30S ribosomal subunit. Contacts protein S5. The interaction surface between S4 and S5 is involved in control of translational fidelity.

The protein localises to the plastid. The protein resides in the chloroplast. Functionally, one of the primary rRNA binding proteins, it binds directly to 16S rRNA where it nucleates assembly of the body of the 30S subunit. Its function is as follows. With S5 and S12 plays an important role in translational accuracy. This is Small ribosomal subunit protein uS4c (rps4) from Phyllostachys flexuosa (Drooping timber bamboo).